A 46-amino-acid polypeptide reads, in one-letter code: PhoP/PhoQ regulator MgrB (46 aa).

A helical membrane pass occupies residues 6–26 (WVALVVVVLACLLLWAQVFNM).

Belongs to the MgrB family. May form homooligomers. Probably interacts with the periplasmic domain of PhoQ.

Its subcellular location is the cell inner membrane. Functionally, phoP-regulated transcription is redox-sensitive, being activated when the periplasm becomes more reducing. MgrB acts between DsbA/DsbB and PhoP/PhoQ in this pathway. Represses PhoP/PhoQ signaling, possibly by binding to the periplasmic domain of PhoQ, altering its activity and that of downstream effector PhoP. This chain is PhoP/PhoQ regulator MgrB, found in Escherichia coli O6:K15:H31 (strain 536 / UPEC).